We begin with the raw amino-acid sequence, 486 residues long: Surface lipoprotein assembly modifier (486 aa).

An N-terminal signal peptide occupies residues 1 to 29 (MKNGVKQISFLSLIGLSLIGLSLTNIAWA). The segment at 30–197 (KVARPKNDTL…QYLLTLNQRN (168 aa)) is N-terminal domain. Residues 198–486 (QWIWQVGLNF…RIYLEIGKIF (289 aa)) are C-terminal probable beta barrel. 14 beta stranded membrane-spanning segments follow: residues 199-209 (WIWQVGLNFLN), 237-248 (GRVFFISRKKWP), 253-262 (FFSKTMFNGN), 276-286 (TLRIGGGLGYQ), 290-300 (VEVSLFPFQEK), 320-330 (LGIRLENVDWL), 334-344 (WQISTALEYGE), 358-367 (YFISSTLFYL), 373-382 (FWFVGMDFHR), 395-404 (KTLRLGWGQD), 409-419 (ISSRLTFSYAN), 437-446 (YATTITLWHR), 453-463 (LTPKLSWDYQK), and 476-486 (NRIYLEIGKIF).

Belongs to the Slam family.

The protein localises to the cell outer membrane. Required for correct export to the cell surface of some cell outer membrane lipoproteins (tested with TpbP) upon heterologous expression in E.coli and probably also in Haemophilus. This chain is Surface lipoprotein assembly modifier, found in Haemophilus influenzae (strain 86-028NP).